The following is a 614-amino-acid chain: Zinc finger protein 276 (614 aa).

The segment at 1-46 is disordered; sequence MKRDRLGRFLSPGIARQRGGSGGGCGSGRTRGRPSRSGGTSADGAA. Residues 19–29 are compositionally biased toward gly residues; the sequence is GGSGGGCGSGR. The 87-residue stretch at 78–164 folds into the ZAD domain; that stretch reads GHCRLCHGKF…LQRVNVSPAG (87 aa). Zn(2+) is bound by residues cysteine 80, cysteine 83, cysteine 137, and cysteine 140. Residues 271-422 are disordered; that stretch reads RLAQNSESNP…PGPKPGWKKK (152 aa). Composition is skewed to polar residues over residues 272-282 and 291-302; these read LAQNSESNPTG and RETQVGSETKTL. Over residues 357-369 the composition is skewed to acidic residues; that stretch reads SDLSEGDFLSEDE. The segment covering 386-408 has biased composition (basic and acidic residues); it reads YPEKKVSGKKSEGREAKRPEEPK. A compositionally biased stretch (basic residues) spans 409–422; the sequence is IRKKPGPKPGWKKK. 5 consecutive C2H2-type zinc fingers follow at residues 434–458, 465–490, 496–518, 524–546, and 554–577; these read YKCPYQGCTAVYRGADGMKKHIKEH, RPCPHPGCNKVFMIDRYLQRHVKLIH, YICDECGQTFKQRKHLLVHQMRH, LQCEVCGFQCRQRASLKYHMTKH, and FACDQCGRRFEKAHNLNVHMSMVH. Positions 588–614 are disordered; it reads PLEAEPPPGPLSPSGTMEGQAVKPEPT.

Found in all the examined tissues, with highest levels in kidney, liver, lung, and spleen.

The protein localises to the nucleus. It localises to the chromosome. It is found in the centromere. The protein resides in the kinetochore. May be involved in transcriptional regulation. The chain is Zinc finger protein 276 (Znf276) from Mus musculus (Mouse).